We begin with the raw amino-acid sequence, 206 residues long: MAMITSRRAAAPCKAQATRRSRVMSVVRAAAVSSEVPDMNKRNIMNLILLGGASLPVGSLALGYGAFFVPPSSGGGSGGQAAKDALGNDIKANAWLATHQKGDRSLSQGLKGDPTYLIVTADGTIEKYGLNAVCTHLGCVVPWVAAENKFKCPCHGSQYNAEGKVVRGPAPLSLALAHCDVQEDGLVTFSTWSETDFRTGLEPWWA.

Residues 1-29 (MAMITSRRAAAPCKAQATRRSRVMSVVRA) constitute a chloroplast transit peptide. The helical transmembrane segment at 48 to 68 (ILLGGASLPVGSLALGYGAFF) threads the bilayer. In terms of domain architecture, Rieske spans 92-188 (ANAWLATHQK…CDVQEDGLVT (97 aa)). 4 residues coordinate [2Fe-2S] cluster: Cys-134, His-136, Cys-152, and His-155. The cysteines at positions 139 and 154 are disulfide-linked.

It belongs to the Rieske iron-sulfur protein family. In terms of assembly, the 4 large subunits of the cytochrome b6-f complex are cytochrome b6, subunit IV (17 kDa polypeptide, petD), cytochrome f and the Rieske protein, while the 4 small subunits are petG, petL, petM and petN. The complex functions as a dimer. Requires [2Fe-2S] cluster as cofactor.

Its subcellular location is the plastid. The protein resides in the chloroplast thylakoid membrane. It catalyses the reaction 2 oxidized [plastocyanin] + a plastoquinol + 2 H(+)(in) = 2 reduced [plastocyanin] + a plastoquinone + 4 H(+)(out). Its function is as follows. Component of the cytochrome b6-f complex, which mediates electron transfer between photosystem II (PSII) and photosystem I (PSI), cyclic electron flow around PSI, and state transitions. In Volvox carteri (Green alga), this protein is Cytochrome b6-f complex iron-sulfur subunit, chloroplastic (petC).